We begin with the raw amino-acid sequence, 131 residues long: MYILTISIPGYSGYSGDDMGDDEYLCSVEVAVNEIGGKWKSLVLCTLKDGKLRFSEINRRIPKITQRMLTRTLRELESSGLINREVYPEVPPRVEYCLTEKGKSVIPILDALCEWGKMYGSHQENSGEKAP.

One can recognise an HTH hxlR-type domain in the interval 26–124 (CSVEVAVNEI…WGKMYGSHQE (99 aa)).

This is an uncharacterized protein from Methanothermobacter thermautotrophicus (strain ATCC 29096 / DSM 1053 / JCM 10044 / NBRC 100330 / Delta H) (Methanobacterium thermoautotrophicum).